The sequence spans 358 residues: Pyruvate dehydrogenase E1 component subunit alpha (358 aa).

In terms of assembly, heterodimer of an alpha and a beta chain. Requires thiamine diphosphate as cofactor.

It catalyses the reaction N(6)-[(R)-lipoyl]-L-lysyl-[protein] + pyruvate + H(+) = N(6)-[(R)-S(8)-acetyldihydrolipoyl]-L-lysyl-[protein] + CO2. In terms of biological role, the pyruvate dehydrogenase complex catalyzes the overall conversion of pyruvate to acetyl-CoA and CO(2). It contains multiple copies of three enzymatic components: pyruvate dehydrogenase (E1), dihydrolipoamide acetyltransferase (E2) and lipoamide dehydrogenase (E3). This chain is Pyruvate dehydrogenase E1 component subunit alpha (pdhA), found in Mycoplasma genitalium (strain ATCC 33530 / DSM 19775 / NCTC 10195 / G37) (Mycoplasmoides genitalium).